The following is a 282-amino-acid chain: N-acetylaspartate synthetase (282 aa).

A helical membrane pass occupies residues 103–125 (FLTVMCYVMTKSFTLTFCAPFIL). The N-acetyltransferase domain maps to 110–269 (VMTKSFTLTF…RSPLERLFFQ (160 aa)).

Belongs to the NAT8 family.

It is found in the cytoplasm. It localises to the microsome membrane. The protein localises to the mitochondrion membrane. Its subcellular location is the endoplasmic reticulum membrane. It catalyses the reaction L-aspartate + acetyl-CoA = N-acetyl-L-aspartate + CoA + H(+). Its function is as follows. Catalyzes the synthesis of N-acetylaspartate acid (NAA) from L-aspartate and acetyl-CoA. The chain is N-acetylaspartate synthetase (nat8l) from Danio rerio (Zebrafish).